We begin with the raw amino-acid sequence, 337 residues long: Glyceraldehyde-3-phosphate dehydrogenase (337 aa).

NAD(+) is bound by residues 12 to 13, Asp-34, and Arg-79; that span reads RI. D-glyceraldehyde 3-phosphate is bound by residues 150–152, Thr-181, 210–211, and Arg-233; these read SCT and TG. Cys-151 acts as the Nucleophile in catalysis. Asn-315 provides a ligand contact to NAD(+).

Belongs to the glyceraldehyde-3-phosphate dehydrogenase family. As to quaternary structure, homotetramer.

It is found in the cytoplasm. The enzyme catalyses D-glyceraldehyde 3-phosphate + phosphate + NAD(+) = (2R)-3-phospho-glyceroyl phosphate + NADH + H(+). The protein operates within carbohydrate degradation; glycolysis; pyruvate from D-glyceraldehyde 3-phosphate: step 1/5. In Ajellomyces capsulatus (Darling's disease fungus), this protein is Glyceraldehyde-3-phosphate dehydrogenase (GPD).